Consider the following 531-residue polypeptide: Transcription termination/antitermination protein NusA (531 aa).

Positions 165 to 235 constitute an S1 motif domain; sequence GEVIEAKVED…SLWPITLSRS (71 aa). Positions 340–410 constitute a KH domain; sequence DTSIEVVVPA…FGIKKRREKI (71 aa). Basic and acidic residues predominate over residues 463 to 475; sequence EKQVTPKEKEKVQ. The disordered stretch occupies residues 463-531; it reads EKQVTPKEKE…KQTFDSFDDL (69 aa). Basic residues predominate over residues 476 to 490; it reads PKAKVHSNSHSKKPA. A compositionally biased stretch (basic and acidic residues) spans 502 to 512; that stretch reads ASDKNLKKDQV. Residues 513–531 are compositionally biased toward polar residues; sequence DNNQTNPQTKQTFDSFDDL.

Belongs to the NusA family. Monomer. Binds directly to the core enzyme of the DNA-dependent RNA polymerase and to nascent RNA.

The protein localises to the cytoplasm. In terms of biological role, participates in both transcription termination and antitermination. This chain is Transcription termination/antitermination protein NusA, found in Mycoplasma genitalium (strain ATCC 33530 / DSM 19775 / NCTC 10195 / G37) (Mycoplasmoides genitalium).